The following is a 1400-amino-acid chain: Tensin-2 (1400 aa).

A Phorbol-ester/DAG-type zinc finger spans residues 31 to 79 (PHSFREKVFRKKTPVCAVCKVTIDGTGVSCRVCKVATHRKCEAKVTSSC). The residue at position 91 (Thr-91) is a Phosphothreonine. Residues Ser-118 and Ser-120 each carry the phosphoserine modification. A Phosphatase tensin-type domain is found at 122–294 (DPLMERRWDL…SYFSGLLSGS (173 aa)). The active-site Phosphocysteine intermediate is Cys-231. The C2 tensin-type domain maps to 299–425 (SSPLFLHYVF…ASVEFVFSSS (127 aa)). Residues 425 to 444 (SPEKVKGNTPRNDPSVSVDY) form a disordered region. A compositionally biased stretch (polar residues) spans 433-444 (TPRNDPSVSVDY). Position 455 is a phosphoserine (Ser-455). At Tyr-456 the chain carries Phosphotyrosine. Ser-466 bears the Phosphoserine mark. Position 474 is a phosphothreonine (Thr-474). Ser-481 is subject to Phosphoserine. Tyr-483 carries the phosphotyrosine modification. The tract at residues 488–536 (RVPRQTPPAPSPELPPPPMLSVSSDSGHSSTLTTEHTAESPGRPPPTAA) is disordered. Over residues 492–506 (QTPPAPSPELPPPPM) the composition is skewed to pro residues. The residue at position 555 (Arg-555) is an Omega-N-methylarginine. The interval 809–1114 (CGSPSEGRGY…DVTQPPEHPL (306 aa)) is disordered. A phosphoserine mark is found at Ser-820, Ser-825, Ser-830, Ser-832, and Ser-835. 2 stretches are compositionally biased toward polar residues: residues 898-917 (CSASSELSGPSTPLHTSSPV) and 929-940 (TRSPSLAPTQRL). Position 909 is a phosphothreonine (Thr-909). Phosphoserine is present on residues Ser-931, Ser-941, and Ser-972. At Thr-977 the chain carries Phosphothreonine. Phosphoserine occurs at positions 991 and 1003. The segment covering 1046-1056 (PEPPQSSPTPA) has biased composition (pro residues). Residues 1082-1098 (SGQQPSPPARSTNQHVT) show a composition bias toward polar residues. The residue at position 1087 (Ser-1087) is a Phosphoserine. Residues 1131–1238 (WYKPHLSRDQ…SLPCCLRIPS (108 aa)) form the SH2 domain. Thr-1173 carries the phosphothreonine modification. A Phosphoserine modification is found at Ser-1238. A PTB domain is found at 1266–1399 (ACSVLYLTSV…FITKVLLGQR (134 aa)).

Belongs to the PTEN phosphatase protein family. As to quaternary structure, interacts with AXL. Interacts with SYK; leading to its phosphorylation. Interacts with SQSTM1 (via PB1 domain); the interaction leads to sequestration of TNS2 in cytoplasmic aggregates with SQSTM1 and promotes TNS2 ubiquitination and proteasomal degradation. Post-translationally, ubiquitinated following sequestration in cytoplasmic aggregates with SQSTM1, leading to proteasomal degradation. In the adult kidney, expressed mainly in glomeruli (at protein level). In the newborn kidney, localizes on the basal surface of podocytes along the glomerular basement membrane and not in endothelial cells. Low expression levels in anabolic skeletal muscles.

The protein resides in the cell junction. Its subcellular location is the focal adhesion. It is found in the cell membrane. It localises to the cytoplasm. It carries out the reaction O-phospho-L-tyrosyl-[protein] + H2O = L-tyrosyl-[protein] + phosphate. Tyrosine-protein phosphatase which regulates cell motility, proliferation and muscle-response to insulin. Phosphatase activity is mediated by binding to phosphatidylinositol-3,4,5-triphosphate (PtdIns(3,4,5)P3) via the SH2 domain. In muscles and under catabolic conditions, dephosphorylates IRS1 leading to its degradation and muscle atrophy. Negatively regulates PI3K-AKT pathway activation. Dephosphorylates nephrin NPHS1 in podocytes which affects mTORC1 complex activity. Under normal glucose conditions, NPHS1 outcompetes IRS1 for binding to phosphatidylinositol 3-kinase (PI3K) which balances mTORC1 activity but high glucose conditions lead to up-regulation of TNS2, increased NPHS1 dephosphorylation and activation of mTORC1, contributing to podocyte hypertrophy and proteinuria. Required for correct podocyte morphology, podocyte-glomerular basement membrane interaction and integrity of the glomerular filtration barrier. Enhances RHOA activation in the presence of DLC1. Plays a role in promoting DLC1-dependent remodeling of the extracellular matrix. The sequence is that of Tensin-2 (Tns2) from Mus musculus (Mouse).